We begin with the raw amino-acid sequence, 320 residues long: ATP-dependent 6-phosphofructokinase (320 aa).

Glycine 12 lines the ATP pocket. ADP contacts are provided by residues 22–26 (RGVVR) and 55–60 (RYSVSD). Residues 73-74 (RF) and 103-106 (GDGS) contribute to the ATP site. Aspartate 104 contributes to the Mg(2+) binding site. 126–128 (TID) contacts substrate. Aspartate 128 functions as the Proton acceptor in the catalytic mechanism. Arginine 155 lines the ADP pocket. Residues arginine 163 and 170 to 172 (MGR) each bind substrate. Residues 186-188 (GCE), lysine 212, and 214-216 (KKH) contribute to the ADP site. Substrate contacts are provided by residues glutamate 223, arginine 244, and 250–253 (HIQR).

Belongs to the phosphofructokinase type A (PFKA) family. ATP-dependent PFK group I subfamily. Prokaryotic clade 'B1' sub-subfamily. In terms of assembly, homotetramer. Mg(2+) serves as cofactor.

Its subcellular location is the cytoplasm. It carries out the reaction beta-D-fructose 6-phosphate + ATP = beta-D-fructose 1,6-bisphosphate + ADP + H(+). Its pathway is carbohydrate degradation; glycolysis; D-glyceraldehyde 3-phosphate and glycerone phosphate from D-glucose: step 3/4. Allosterically activated by ADP and other diphosphonucleosides, and allosterically inhibited by phosphoenolpyruvate. Catalyzes the phosphorylation of D-fructose 6-phosphate to fructose 1,6-bisphosphate by ATP, the first committing step of glycolysis. In Enterobacter cloacae, this protein is ATP-dependent 6-phosphofructokinase.